We begin with the raw amino-acid sequence, 138 residues long: uncharacterized protein (138 aa).

This sequence to phage 186 CP81.

This is an uncharacterized protein from Salmonella typhimurium (strain LT2 / SGSC1412 / ATCC 700720).